A 349-amino-acid chain; its full sequence is N-acetyl-gamma-glutamyl-phosphate reductase (349 aa).

C152 is a catalytic residue.

It belongs to the NAGSA dehydrogenase family. Type 1 subfamily.

The protein localises to the cytoplasm. The enzyme catalyses N-acetyl-L-glutamate 5-semialdehyde + phosphate + NADP(+) = N-acetyl-L-glutamyl 5-phosphate + NADPH + H(+). It participates in amino-acid biosynthesis; L-arginine biosynthesis; N(2)-acetyl-L-ornithine from L-glutamate: step 3/4. Its function is as follows. Catalyzes the NADPH-dependent reduction of N-acetyl-5-glutamyl phosphate to yield N-acetyl-L-glutamate 5-semialdehyde. The protein is N-acetyl-gamma-glutamyl-phosphate reductase of Clavibacter sepedonicus (Clavibacter michiganensis subsp. sepedonicus).